Reading from the N-terminus, the 957-residue chain is Receptor-like protein 34 (957 aa).

Positions 1–31 (MKGSWVVSTSIIRITLSFTFLFICHFSDVLA) are cleaved as a signal peptide. Over 32–910 (APTRHLCRPE…EEEDEDLISW (879 aa)) the chain is Extracellular. Residues Asn-78, Asn-101, Asn-114, Asn-143, Asn-167, Asn-191, and Asn-215 are each glycosylated (N-linked (GlcNAc...) asparagine). LRR repeat units lie at residues 120-143 (LHFL…SIEN), 144-167 (LSHL…SIGN), 168-192 (LSRL…IGNL), 194-216 (HLTF…IGNL), 217-240 (SHLT…IGGL), 241-264 (SNLT…IGNL), 266-287 (QLIV…SFGN), 288-312 (LNQL…LLNL), 313-336 (TGLS…ITSL), 338-360 (NLMA…LFII), 361-384 (PSLT…NISS), 386-409 (SNLQ…ISKL), 412-434 (LQEL…IFSH), 435-459 (LKSL…ILPY), 460-483 (FKTL…SVSS), 487-510 (SQSI…LRTQ), 511-534 (HELG…LWTL), and 535-557 (PNLF…TKPE). N-linked (GlcNAc...) asparagine glycans are attached at residues Asn-242 and Asn-263. Asn-311 and Asn-332 each carry an N-linked (GlcNAc...) asparagine glycan. Asn-381 carries an N-linked (GlcNAc...) asparagine glycan. N-linked (GlcNAc...) asparagine glycosylation is present at Asn-477. Asn-541, Asn-544, Asn-569, Asn-593, Asn-608, and Asn-618 each carry an N-linked (GlcNAc...) asparagine glycan. The stretch at 558–580 (PSMAYLLGSNNNFTGKIPSFICE) is one LRR 19; degenerate repeat. 10 LRR repeats span residues 581-605 (LRSL…MENL), 606-630 (KSNL…IFES), 632-652 (RSLD…LRFF), 653-675 (SNLE…WLSS), 677-698 (QKLQ…QALF), 699-722 (PKLR…YFVE), 765-789 (LTIY…IGLL), 790-813 (KELH…IGNL), 815-837 (ALES…IGNL), and 839-862 (LLSY…QFLT). N-linked (GlcNAc...) asparagine glycosylation is present at Asn-712. 4 N-linked (GlcNAc...) asparagine glycosylation sites follow: Asn-796, Asn-812, Asn-836, and Asn-844. Residues 911–931 (IAAAIGFGPGIAFGLMFGYIL) traverse the membrane as a helical segment. Over 932–957 (VSYKPEWFMNPFGRNNRRRKRHTTTH) the chain is Cytoplasmic.

This sequence belongs to the RLP family.

Its subcellular location is the cell membrane. This chain is Receptor-like protein 34, found in Arabidopsis thaliana (Mouse-ear cress).